The primary structure comprises 233 residues: Sugar fermentation stimulation protein homolog (233 aa).

The protein belongs to the SfsA family.

The polypeptide is Sugar fermentation stimulation protein homolog (Pyrobaculum neutrophilum (strain DSM 2338 / JCM 9278 / NBRC 100436 / V24Sta) (Thermoproteus neutrophilus)).